The sequence spans 366 residues: NADH-quinone oxidoreductase subunit D (366 aa).

Belongs to the complex I 49 kDa subunit family. In terms of assembly, NDH-1 is composed of 14 different subunits. Subunits NuoB, C, D, E, F, and G constitute the peripheral sector of the complex.

It localises to the cell membrane. The enzyme catalyses a quinone + NADH + 5 H(+)(in) = a quinol + NAD(+) + 4 H(+)(out). Its function is as follows. NDH-1 shuttles electrons from NADH, via FMN and iron-sulfur (Fe-S) centers, to quinones in the respiratory chain. The immediate electron acceptor for the enzyme in this species is believed to be a menaquinone. Couples the redox reaction to proton translocation (for every two electrons transferred, four hydrogen ions are translocated across the cytoplasmic membrane), and thus conserves the redox energy in a proton gradient. The chain is NADH-quinone oxidoreductase subunit D from Bacillus cereus (strain ATCC 10987 / NRS 248).